The following is a 638-amino-acid chain: 1-deoxy-D-xylulose-5-phosphate synthase (638 aa).

Thiamine diphosphate is bound by residues His-79 and 120–122 (AHS). Asp-151 contacts Mg(2+). Residues 152 to 153 (GA), Asn-180, Tyr-289, and Glu-371 each bind thiamine diphosphate. Asn-180 contacts Mg(2+).

It belongs to the transketolase family. DXPS subfamily. In terms of assembly, homodimer. Mg(2+) is required as a cofactor. The cofactor is thiamine diphosphate.

It carries out the reaction D-glyceraldehyde 3-phosphate + pyruvate + H(+) = 1-deoxy-D-xylulose 5-phosphate + CO2. It participates in metabolic intermediate biosynthesis; 1-deoxy-D-xylulose 5-phosphate biosynthesis; 1-deoxy-D-xylulose 5-phosphate from D-glyceraldehyde 3-phosphate and pyruvate: step 1/1. In terms of biological role, catalyzes the acyloin condensation reaction between C atoms 2 and 3 of pyruvate and glyceraldehyde 3-phosphate to yield 1-deoxy-D-xylulose-5-phosphate (DXP). This Rhizobium johnstonii (strain DSM 114642 / LMG 32736 / 3841) (Rhizobium leguminosarum bv. viciae) protein is 1-deoxy-D-xylulose-5-phosphate synthase.